Here is a 111-residue protein sequence, read N- to C-terminus: Large ribosomal subunit protein uL22 (111 aa).

It belongs to the universal ribosomal protein uL22 family. In terms of assembly, part of the 50S ribosomal subunit.

This protein binds specifically to 23S rRNA; its binding is stimulated by other ribosomal proteins, e.g. L4, L17, and L20. It is important during the early stages of 50S assembly. It makes multiple contacts with different domains of the 23S rRNA in the assembled 50S subunit and ribosome. Its function is as follows. The globular domain of the protein is located near the polypeptide exit tunnel on the outside of the subunit, while an extended beta-hairpin is found that lines the wall of the exit tunnel in the center of the 70S ribosome. This Pelobacter propionicus (strain DSM 2379 / NBRC 103807 / OttBd1) protein is Large ribosomal subunit protein uL22.